The primary structure comprises 204 residues: dTTP/UTP pyrophosphatase (204 aa).

The active-site Proton acceptor is Asp-68.

It belongs to the Maf family. YhdE subfamily. A divalent metal cation is required as a cofactor.

It is found in the cytoplasm. It carries out the reaction dTTP + H2O = dTMP + diphosphate + H(+). It catalyses the reaction UTP + H2O = UMP + diphosphate + H(+). In terms of biological role, nucleoside triphosphate pyrophosphatase that hydrolyzes dTTP and UTP. May have a dual role in cell division arrest and in preventing the incorporation of modified nucleotides into cellular nucleic acids. In Thermotoga petrophila (strain ATCC BAA-488 / DSM 13995 / JCM 10881 / RKU-1), this protein is dTTP/UTP pyrophosphatase.